The following is a 248-amino-acid chain: 2,3-bisphosphoglycerate-dependent phosphoglycerate mutase (248 aa).

Residues 8 to 15 (RHGESTWN), 21 to 22 (TG), R60, 87 to 90 (ERHY), K98, and 114 to 115 (RR) contribute to the substrate site. The active-site Tele-phosphohistidine intermediate is H9. The Proton donor/acceptor role is filled by E87. Residues 117 to 137 (YDTPPPALEPTDPRASYDDPR) are disordered. Residues 127–137 (TDPRASYDDPR) are compositionally biased toward basic and acidic residues. Residue 183–184 (GN) participates in substrate binding.

Belongs to the phosphoglycerate mutase family. BPG-dependent PGAM subfamily. Homodimer.

It carries out the reaction (2R)-2-phosphoglycerate = (2R)-3-phosphoglycerate. Its pathway is carbohydrate degradation; glycolysis; pyruvate from D-glyceraldehyde 3-phosphate: step 3/5. Catalyzes the interconversion of 2-phosphoglycerate and 3-phosphoglycerate. This Cupriavidus taiwanensis (strain DSM 17343 / BCRC 17206 / CCUG 44338 / CIP 107171 / LMG 19424 / R1) (Ralstonia taiwanensis (strain LMG 19424)) protein is 2,3-bisphosphoglycerate-dependent phosphoglycerate mutase.